Reading from the N-terminus, the 457-residue chain is tRNA modification GTPase MnmE (457 aa).

(6S)-5-formyl-5,6,7,8-tetrahydrofolate contacts are provided by Arg23, Glu86, and Arg125. One can recognise a TrmE-type G domain in the interval 221–377; the sequence is GVSVLIAGKP…LREAVFETFI (157 aa). Asn231 provides a ligand contact to K(+). GTP is bound by residues 231-236, 250-256, and 275-278; these read NVGKSS, TSVPGTT, and DTAG. Position 235 (Ser235) interacts with Mg(2+). K(+)-binding residues include Thr250, Val252, and Thr255. Residue Thr256 participates in Mg(2+) binding. Lys457 is a binding site for (6S)-5-formyl-5,6,7,8-tetrahydrofolate.

Belongs to the TRAFAC class TrmE-Era-EngA-EngB-Septin-like GTPase superfamily. TrmE GTPase family. In terms of assembly, homodimer. Heterotetramer of two MnmE and two MnmG subunits. The cofactor is K(+).

Its subcellular location is the cytoplasm. In terms of biological role, exhibits a very high intrinsic GTPase hydrolysis rate. Involved in the addition of a carboxymethylaminomethyl (cmnm) group at the wobble position (U34) of certain tRNAs, forming tRNA-cmnm(5)s(2)U34. This chain is tRNA modification GTPase MnmE, found in Geobacter metallireducens (strain ATCC 53774 / DSM 7210 / GS-15).